The primary structure comprises 150 residues: SsrA-binding protein (150 aa).

It belongs to the SmpB family.

It localises to the cytoplasm. In terms of biological role, required for rescue of stalled ribosomes mediated by trans-translation. Binds to transfer-messenger RNA (tmRNA), required for stable association of tmRNA with ribosomes. tmRNA and SmpB together mimic tRNA shape, replacing the anticodon stem-loop with SmpB. tmRNA is encoded by the ssrA gene; the 2 termini fold to resemble tRNA(Ala) and it encodes a 'tag peptide', a short internal open reading frame. During trans-translation Ala-aminoacylated tmRNA acts like a tRNA, entering the A-site of stalled ribosomes, displacing the stalled mRNA. The ribosome then switches to translate the ORF on the tmRNA; the nascent peptide is terminated with the 'tag peptide' encoded by the tmRNA and targeted for degradation. The ribosome is freed to recommence translation, which seems to be the essential function of trans-translation. This chain is SsrA-binding protein, found in Bacteroides thetaiotaomicron (strain ATCC 29148 / DSM 2079 / JCM 5827 / CCUG 10774 / NCTC 10582 / VPI-5482 / E50).